We begin with the raw amino-acid sequence, 365 residues long: Short-chain dehydrogenase iccH (365 aa).

Positions 16, 52, and 70 each coordinate NADP(+). N-linked (GlcNAc...) asparagine glycosylation is present at Asn90. NADP(+) is bound by residues Asn102, Tyr221, Lys225, and Ser260. The active-site Proton donor is the Tyr221. The active-site Lowers pKa of active site Tyr is the Lys225. The chain crosses the membrane as a helical span at residues 267–287; the sequence is IWVMFLLMKFVLPLLAPLAVW. 2 N-linked (GlcNAc...) asparagine glycosylation sites follow: Asn291 and Asn324.

This sequence belongs to the short-chain dehydrogenases/reductases (SDR) family.

It is found in the membrane. The protein operates within mycotoxin biosynthesis. In terms of biological role, NADH-dependent flavin oxidoreductase; part of the gene cluster that mediates the biosynthesis of ilicicolin H, a 4-hydroxy-2-pyridonealkaloid that has potent and broad antifungal activities by inhibiting the mitochondrial respiration chain. IccA to iccE are sufficient for ilicicolin H biosynthesis and the roles of the remaining enzymes, iccF, iccG and iccH within the pathway have still to be determined. The biosynthesis of ilicicolin H starts with formation of the tetramic acid by the hybrid PKS-NRPS synthetase iccA with the partnering trans-enoyl reductase iccB since iccA lacks a designated enoylreductase (ER) domain. The cytochrome P450 monooxygenase iccC then catalyzes the ring expansion of the tetramate to the acyclic 2-pyridone. The pericyclase iccD further converts the acyclic 2-pyridone into 8-epi-ilicicolin H. Finally, the epimerase iccE converts 8-epi-ilicicolin H into ilicicolin H via epimerizationd. The protein is Short-chain dehydrogenase iccH of Talaromyces variabilis (Penicillium variabile).